Consider the following 514-residue polypeptide: Adenylosuccinate synthetase 2, chloroplastic (514 aa).

A chloroplast-targeting transit peptide spans 1 to 56 (MAMAAAAAVASQGLLATSSQQQKKSSAKLICNAATFFSGKRLLWVKSCNNGAVGLR). GTP is bound by residues 100-106 (GDEGKGK) and 128-130 (GHT). Asp-101 (proton acceptor) is an active-site residue. Residues Asp-101 and Gly-128 each coordinate Mg(2+). Residues 101 to 104 (DEGK), 126 to 129 (NAGH), Thr-218, Arg-232, Gln-312, Thr-327, and Arg-391 each bind IMP. His-129 (proton donor) is an active-site residue. 387–393 (TTTGRPR) is a binding site for substrate. GTP contacts are provided by residues Arg-393, 419–421 (KLD), and 502–504 (GVG).

This sequence belongs to the adenylosuccinate synthetase family. In terms of assembly, homodimer. Requires Mg(2+) as cofactor.

The protein localises to the plastid. It is found in the chloroplast. The catalysed reaction is IMP + L-aspartate + GTP = N(6)-(1,2-dicarboxyethyl)-AMP + GDP + phosphate + 2 H(+). It functions in the pathway purine metabolism; AMP biosynthesis via de novo pathway; AMP from IMP: step 1/2. Plays an important role in the de novo pathway and in the salvage pathway of purine nucleotide biosynthesis. Catalyzes the first committed step in the biosynthesis of AMP from IMP. This is Adenylosuccinate synthetase 2, chloroplastic from Physcomitrium patens (Spreading-leaved earth moss).